We begin with the raw amino-acid sequence, 790 residues long: Valine--tRNA ligase (790 aa).

Residues 40–50 carry the 'HIGH' region motif; that stretch reads PTVSGKMHMGH. Positions 521-525 match the 'KMSKS' region motif; the sequence is KMSKS. Lys-524 contacts ATP.

It belongs to the class-I aminoacyl-tRNA synthetase family. ValS type 2 subfamily.

Its subcellular location is the cytoplasm. It catalyses the reaction tRNA(Val) + L-valine + ATP = L-valyl-tRNA(Val) + AMP + diphosphate. Functionally, catalyzes the attachment of valine to tRNA(Val). As ValRS can inadvertently accommodate and process structurally similar amino acids such as threonine, to avoid such errors, it has a 'posttransfer' editing activity that hydrolyzes mischarged Thr-tRNA(Val) in a tRNA-dependent manner. This is Valine--tRNA ligase from Thermoplasma volcanium (strain ATCC 51530 / DSM 4299 / JCM 9571 / NBRC 15438 / GSS1).